The primary structure comprises 396 residues: Elongation factor Tu 1 (396 aa).

Residues 10–206 (KPHVNVGTIG…QIDSYIPEPE (197 aa)) enclose the tr-type G domain. The G1 stretch occupies residues 19 to 26 (GHIDHGKT). 19–26 (GHIDHGKT) provides a ligand contact to GTP. Thr26 contributes to the Mg(2+) binding site. The tract at residues 60–64 (GITIA) is G2. Positions 81–84 (DCPG) are G3. GTP contacts are provided by residues 81-85 (DCPGH) and 136-139 (NKCD). Positions 136–139 (NKCD) are G4. Positions 174 to 176 (SAL) are G5.

It belongs to the TRAFAC class translation factor GTPase superfamily. Classic translation factor GTPase family. EF-Tu/EF-1A subfamily. Monomer.

Its subcellular location is the cytoplasm. It catalyses the reaction GTP + H2O = GDP + phosphate + H(+). GTP hydrolase that promotes the GTP-dependent binding of aminoacyl-tRNA to the A-site of ribosomes during protein biosynthesis. The protein is Elongation factor Tu 1 of Desulfotalea psychrophila (strain LSv54 / DSM 12343).